The following is a 394-amino-acid chain: Elongation factor Tu (394 aa).

One can recognise a tr-type G domain in the interval 10–204; it reads KPHLNVGTIG…TLDTYIEDPV (195 aa). The interval 19–26 is G1; the sequence is GHVDHGKT. 19–26 lines the GTP pocket; it reads GHVDHGKT. Residue Thr-26 coordinates Mg(2+). The interval 60-64 is G2; sequence GITIK. The G3 stretch occupies residues 81–84; sequence DCPG. Residues 81 to 85 and 136 to 139 each bind GTP; these read DCPGH and NKCD. The tract at residues 136–139 is G4; the sequence is NKCD. Residues 174–176 are G5; that stretch reads SAL.

This sequence belongs to the TRAFAC class translation factor GTPase superfamily. Classic translation factor GTPase family. EF-Tu/EF-1A subfamily. As to quaternary structure, monomer.

The protein resides in the cytoplasm. It catalyses the reaction GTP + H2O = GDP + phosphate + H(+). GTP hydrolase that promotes the GTP-dependent binding of aminoacyl-tRNA to the A-site of ribosomes during protein biosynthesis. This Onion yellows phytoplasma (strain OY-M) protein is Elongation factor Tu.